The sequence spans 375 residues: Glutamate 5-kinase (375 aa).

K17 lines the ATP pocket. Substrate is bound by residues S58, D145, and N157. Residues 177–178 and 219–225 each bind ATP; these read SD and TGGMVTK. In terms of domain architecture, PUA spans 281–359; it reads QGALTLDDGA…RELARELGPA (79 aa).

The protein belongs to the glutamate 5-kinase family.

The protein localises to the cytoplasm. The enzyme catalyses L-glutamate + ATP = L-glutamyl 5-phosphate + ADP. The protein operates within amino-acid biosynthesis; L-proline biosynthesis; L-glutamate 5-semialdehyde from L-glutamate: step 1/2. In terms of biological role, catalyzes the transfer of a phosphate group to glutamate to form L-glutamate 5-phosphate. In Streptomyces avermitilis (strain ATCC 31267 / DSM 46492 / JCM 5070 / NBRC 14893 / NCIMB 12804 / NRRL 8165 / MA-4680), this protein is Glutamate 5-kinase.